The following is a 237-amino-acid chain: Purine nucleoside phosphorylase DeoD-type (237 aa).

His-4 serves as a coordination point for a purine D-ribonucleoside. Phosphate is bound by residues Gly-20, Arg-24, Arg-43, and 87–90; that span reads RVGT. Residues 180-182 and 204-205 contribute to the a purine D-ribonucleoside site; these read EME and SD. The active-site Proton donor is the Asp-205.

It belongs to the PNP/UDP phosphorylase family. As to quaternary structure, homohexamer; trimer of homodimers.

The enzyme catalyses a purine D-ribonucleoside + phosphate = a purine nucleobase + alpha-D-ribose 1-phosphate. It catalyses the reaction a purine 2'-deoxy-D-ribonucleoside + phosphate = a purine nucleobase + 2-deoxy-alpha-D-ribose 1-phosphate. Catalyzes the reversible phosphorolytic breakdown of the N-glycosidic bond in the beta-(deoxy)ribonucleoside molecules, with the formation of the corresponding free purine bases and pentose-1-phosphate. The chain is Purine nucleoside phosphorylase DeoD-type from Streptococcus suis (strain 98HAH33).